The following is a 324-amino-acid chain: ATP-dependent 6-phosphofructokinase (324 aa).

Gly15 contributes to the ATP binding site. 25 to 29 (RGVVR) is a binding site for ADP. ATP contacts are provided by residues 76–77 (RF) and 106–109 (GDGS). Asp107 provides a ligand contact to Mg(2+). Substrate is bound at residue 130 to 132 (TID). Asp132 serves as the catalytic Proton acceptor. ADP is bound at residue Arg159. Residues Arg167 and 174 to 176 (MGR) contribute to the substrate site. Residues 190 to 192 (GCE), Lys216, and 218 to 220 (KRH) contribute to the ADP site. Residues Glu227, Arg248, and 254 to 257 (HIQR) each bind substrate.

It belongs to the phosphofructokinase type A (PFKA) family. ATP-dependent PFK group I subfamily. Prokaryotic clade 'B1' sub-subfamily. In terms of assembly, homotetramer. Requires Mg(2+) as cofactor.

Its subcellular location is the cytoplasm. The enzyme catalyses beta-D-fructose 6-phosphate + ATP = beta-D-fructose 1,6-bisphosphate + ADP + H(+). It participates in carbohydrate degradation; glycolysis; D-glyceraldehyde 3-phosphate and glycerone phosphate from D-glucose: step 3/4. With respect to regulation, allosterically activated by ADP and other diphosphonucleosides, and allosterically inhibited by phosphoenolpyruvate. Functionally, catalyzes the phosphorylation of D-fructose 6-phosphate to fructose 1,6-bisphosphate by ATP, the first committing step of glycolysis. This chain is ATP-dependent 6-phosphofructokinase, found in Actinobacillus pleuropneumoniae serotype 5b (strain L20).